The sequence spans 347 residues: Holliday junction branch migration complex subunit RuvB (347 aa).

Residues 4–185 form a large ATPase domain (RuvB-L) region; sequence TDRLITPAPL…FGIISRLEFY (182 aa). Residues Leu-24, Arg-25, Gly-66, Lys-69, Thr-70, Thr-71, 132–134, Arg-175, Tyr-185, and Arg-222 each bind ATP; that span reads EDY. Thr-70 is a binding site for Mg(2+). A small ATPAse domain (RuvB-S) region spans residues 186–256; it reads SVEELTQIVM…VADAALLMLD (71 aa). The interval 259 to 347 is head domain (RuvB-H); that stretch reads AIGLDVMDRK…LSADLWDEKQ (89 aa). DNA-binding residues include Arg-295, Arg-314, and Arg-319.

Belongs to the RuvB family. As to quaternary structure, homohexamer. Forms an RuvA(8)-RuvB(12)-Holliday junction (HJ) complex. HJ DNA is sandwiched between 2 RuvA tetramers; dsDNA enters through RuvA and exits via RuvB. An RuvB hexamer assembles on each DNA strand where it exits the tetramer. Each RuvB hexamer is contacted by two RuvA subunits (via domain III) on 2 adjacent RuvB subunits; this complex drives branch migration. In the full resolvosome a probable DNA-RuvA(4)-RuvB(12)-RuvC(2) complex forms which resolves the HJ.

It localises to the cytoplasm. The enzyme catalyses ATP + H2O = ADP + phosphate + H(+). Functionally, the RuvA-RuvB-RuvC complex processes Holliday junction (HJ) DNA during genetic recombination and DNA repair, while the RuvA-RuvB complex plays an important role in the rescue of blocked DNA replication forks via replication fork reversal (RFR). RuvA specifically binds to HJ cruciform DNA, conferring on it an open structure. The RuvB hexamer acts as an ATP-dependent pump, pulling dsDNA into and through the RuvAB complex. RuvB forms 2 homohexamers on either side of HJ DNA bound by 1 or 2 RuvA tetramers; 4 subunits per hexamer contact DNA at a time. Coordinated motions by a converter formed by DNA-disengaged RuvB subunits stimulates ATP hydrolysis and nucleotide exchange. Immobilization of the converter enables RuvB to convert the ATP-contained energy into a lever motion, pulling 2 nucleotides of DNA out of the RuvA tetramer per ATP hydrolyzed, thus driving DNA branch migration. The RuvB motors rotate together with the DNA substrate, which together with the progressing nucleotide cycle form the mechanistic basis for DNA recombination by continuous HJ branch migration. Branch migration allows RuvC to scan DNA until it finds its consensus sequence, where it cleaves and resolves cruciform DNA. In Nitrosospira multiformis (strain ATCC 25196 / NCIMB 11849 / C 71), this protein is Holliday junction branch migration complex subunit RuvB.